The sequence spans 883 residues: Translation initiation factor IF-2 (883 aa).

Positions 32–45 (NDLNGKNNSNSSIN) are enriched in polar residues. Disordered regions lie at residues 32–216 (NDLN…QNKY) and 251–275 (RKLGEKKKQQQESQKSYKRKKAETE). The span at 46–62 (LDKHNNKVEYSQNRDNR) shows a compositional bias: basic and acidic residues. Positions 75 to 216 (GGYSQNRDNR…VGKNTSQNKY (142 aa)) are enriched in polar residues. Positions 251–260 (RKLGEKKKQQ) are enriched in basic and acidic residues. One can recognise a tr-type G domain in the interval 381–554 (EKPPVITIMG…DMMLLKANPS (174 aa)). Residues 390–397 (GHVDHGKT) form a G1 region. 390–397 (GHVDHGKT) is a binding site for GTP. The G2 stretch occupies residues 415-419 (GITQH). The tract at residues 436-439 (DTPG) is G3. GTP contacts are provided by residues 436 to 440 (DTPGH) and 490 to 493 (NKID). Residues 490-493 (NKID) form a G4 region. Positions 526–528 (SAL) are G5.

This sequence belongs to the TRAFAC class translation factor GTPase superfamily. Classic translation factor GTPase family. IF-2 subfamily.

It is found in the cytoplasm. Functionally, one of the essential components for the initiation of protein synthesis. Protects formylmethionyl-tRNA from spontaneous hydrolysis and promotes its binding to the 30S ribosomal subunits. Also involved in the hydrolysis of GTP during the formation of the 70S ribosomal complex. In Borrelia garinii subsp. bavariensis (strain ATCC BAA-2496 / DSM 23469 / PBi) (Borreliella bavariensis), this protein is Translation initiation factor IF-2.